A 310-amino-acid chain; its full sequence is MKRIQIIDSHTGGEPTRLVVSGFPSLGDGTMAERRDVLAREHDRYRTACILEPRGSDVLVGALLCDPVAPDAAAGVIFFNNSGYLGMCGHGTIGVVRTLHHMGRIAPGVHRIETPVGTVEATLHDDLSVSVRNVPAYRHAQGVALDVPGYGPVKGDIAWGGNWFFLISDHGQRVAGDNVAALTAYASAVREGLERAGITGANGGEIDHIELFADDPEHDSRSFVLCPGLAYDRSPCGTGTSAKLACLAADGKLAPGAVWRQASVIGSVFHASYERADGGIVPTIRGSAHLSAEATLLIEEDDPFGWGIGS.

Cys88 functions as the Proton acceptor in the catalytic mechanism. Substrate-binding positions include 89–90 (GH), His208, and Asp232. Catalysis depends on Cys236, which acts as the Proton donor. 237–238 (GT) contributes to the substrate binding site.

It belongs to the proline racemase family.

It carries out the reaction trans-4-hydroxy-L-proline = cis-4-hydroxy-D-proline. In terms of biological role, catalyzes the epimerization of trans-4-hydroxy-L-proline (t4LHyp) to cis-4-hydroxy-D-proline (c4DHyp). Is likely involved in a degradation pathway that converts t4LHyp to alpha-ketoglutarate. Displays no proline racemase activity. The polypeptide is 4-hydroxyproline 2-epimerase (Burkholderia cenocepacia (strain ATCC BAA-245 / DSM 16553 / LMG 16656 / NCTC 13227 / J2315 / CF5610) (Burkholderia cepacia (strain J2315))).